Consider the following 532-residue polypeptide: Di/tripeptide-binding protein 2 (532 aa).

Residues 1–24 form the signal peptide; the sequence is MRPRSALRYSLLLLAFAASAAIQA.

It belongs to the bacterial solute-binding protein 5 family. As to quaternary structure, the complex is composed of two ATP-binding proteins (DppD and DppF), two transmembrane proteins (DppB and DppC) and a solute-binding protein (DppA2). Five orthologous SBPs (DppA1-A5) are present in P.aeruginosa, which increases the substrate specificity of the DppBCDF transporter.

Functionally, part of the ABC transporter DppABCDF involved in the uptake of various di/tripeptides. Shows high flexibility on substrate recognition. Efficiently uses tripeptides. This chain is Di/tripeptide-binding protein 2, found in Pseudomonas aeruginosa (strain UCBPP-PA14).